Here is a 482-residue protein sequence, read N- to C-terminus: MTTYDTQPSTLIRNAAAIMTGGRGTADDPSRVPGPDIRIVGDTIDAIGALAPRPGETIVDATDCVIYPAWVNTHHHLFQSLLKGEPAGLDATLTPWLAATPYRFRALFDERRFRLAARIGLIELARSGCATVADHNYVYYPGMPFDSSAILFEEAEKLGLRFVLLRGGATQTRQLEADLPTALRPETLDAYVADIERLAARYHDASPRAMRRVVMAPTTVLYSISPREMRETAAVARRLGLRMHSHLSETVGYQDSAYSMYGKSPVAFCGEHDWLGSDVWYAHLVKVDADEIALLAQTGTGVAHCPQSNGRLGSGICPVREMADAGVPVSIGVDGAASNEAADMISEVHMTWLAQRARLGMLAQPAYRGGSFEGGAGAASIAEVIHWGTAGGARVMGLDEVGKVAVGYAADIAVYRLDDPRYFGLHDPAIGPVASGGRPSVMALFSAGKRVVVDDLIEGVDIKELGGEARRVVRELLREVVV.

The Zn(2+) site is built by H74 and H76. Position 79 (Q79) interacts with substrate. H246 contacts Zn(2+). The substrate site is built by E249 and H283. H283 and D334 together coordinate Zn(2+).

The protein belongs to the metallo-dependent hydrolases superfamily. ATZ/TRZ family. It depends on Zn(2+) as a cofactor.

It catalyses the reaction a 2-amino-4-hydroxypteridine + H2O + H(+) = a 2,4-dihydroxypteridine + NH4(+). This is Isoxanthopterin deaminase from Unknown prokaryotic organism.